The sequence spans 539 residues: UDP-N-acetylmuramate--L-alanine ligase (539 aa).

ATP is bound at residue 165–171 (GTHGKTT).

Belongs to the MurCDEF family.

It localises to the cytoplasm. It carries out the reaction UDP-N-acetyl-alpha-D-muramate + L-alanine + ATP = UDP-N-acetyl-alpha-D-muramoyl-L-alanine + ADP + phosphate + H(+). The protein operates within cell wall biogenesis; peptidoglycan biosynthesis. Cell wall formation. This Trichodesmium erythraeum (strain IMS101) protein is UDP-N-acetylmuramate--L-alanine ligase.